The primary structure comprises 446 residues: Glycerol-3-phosphate acyltransferase 3 (446 aa).

3 helical membrane passes run 11 to 31 (IFII…MFGS), 146 to 166 (LRVT…LLPL), and 168 to 188 (ITLA…VGQL). The short motif at 236 to 241 (HTSPID) is the HXXXXD motif element.

This sequence belongs to the 1-acyl-sn-glycerol-3-phosphate acyltransferase family.

The protein localises to the endoplasmic reticulum membrane. The catalysed reaction is sn-glycerol 3-phosphate + an acyl-CoA = a 1-acyl-sn-glycero-3-phosphate + CoA. It carries out the reaction a 1-acyl-sn-glycero-3-phosphate + an acyl-CoA = a 1,2-diacyl-sn-glycero-3-phosphate + CoA. It catalyses the reaction dodecanoyl-CoA + sn-glycerol 3-phosphate = 1-dodecanoyl-sn-glycerol 3-phosphate + CoA. The enzyme catalyses sn-glycerol 3-phosphate + hexadecanoyl-CoA = 1-hexadecanoyl-sn-glycero-3-phosphate + CoA. The catalysed reaction is sn-glycerol 3-phosphate + (9Z)-octadecenoyl-CoA = 1-(9Z-octadecenoyl)-sn-glycero-3-phosphate + CoA. It carries out the reaction (9Z,12Z)-octadecadienoyl-CoA + sn-glycerol 3-phosphate = 1-(9Z,12Z)-octadecadienoyl-sn-glycero-3-phosphate + CoA. It catalyses the reaction 1-tetradecanoyl-sn-glycerol 3-phosphate + (9Z)-octadecenoyl-CoA = 1-tetradecanoyl-2-(9Z)-octadecenoyl-sn-glycero-3-phosphate + CoA. The enzyme catalyses 1-hexadecanoyl-sn-glycero-3-phosphate + (9Z)-octadecenoyl-CoA = 1-hexadecanoyl-2-(9Z-octadecenoyl)-sn-glycero-3-phosphate + CoA. The catalysed reaction is 1-(9Z-octadecenoyl)-sn-glycero-3-phosphate + (9Z)-octadecenoyl-CoA = 1,2-di-(9Z-octadecenoyl)-sn-glycero-3-phosphate + CoA. It carries out the reaction 1-(6Z,9Z,12Z-octadecatrienoyl)-sn-glycero-3-phosphate + (9Z)-octadecenoyl-CoA = (6Z,9Z,12Z)-octadecatrienoyl-2-(9Z)-octadecenoyl-sn-glycero-3-phosphate + CoA. It catalyses the reaction 1-(9Z,12Z,15Z)-octadecatrienoyl-sn-glycero-3-phosphate + (9Z)-octadecenoyl-CoA = 1-(9Z,12Z,15Z)-octadecatrienoyl-2-(9Z)-octadecenoyl-sn-glycero-3-phosphate + CoA. The enzyme catalyses 1-(9Z-octadecenoyl)-sn-glycero-3-phosphate + tetradecanoyl-CoA = 1-(9Z)-octadecenoyl-2-tetradecanoyl-sn-glycero-3-phosphate + CoA. The catalysed reaction is 1-(9Z-octadecenoyl)-sn-glycero-3-phosphate + hexadecanoyl-CoA = 1-(9Z)-octadecenoyl-2-hexadecanoyl-sn-glycero-3-phosphate + CoA. It carries out the reaction 1-(9Z-octadecenoyl)-sn-glycero-3-phosphate + octadecanoyl-CoA = 1-(9Z-octadecenoyl)-2-octadecanoyl-sn-glycero-3-phosphate + CoA. It catalyses the reaction 1-(9Z-octadecenoyl)-sn-glycero-3-phosphate + (9Z,12Z)-octadecadienoyl-CoA = 1-(9Z)-octadecenoyl-2-(9Z,12Z)-octadecadienoyl-sn-glycero-3-phosphate + CoA. The enzyme catalyses 1-(5Z,8Z,11Z,14Z-eicosatetraenoyl)-sn-glycero-3-phosphate + (9Z)-octadecenoyl-CoA = 1-(5Z,8Z,11Z,14Z)-eicosatetraenoyl-2-(9Z)-octadecenoyl-sn-glycero-3-phosphate + CoA. It functions in the pathway glycerolipid metabolism; triacylglycerol biosynthesis. Its pathway is phospholipid metabolism; CDP-diacylglycerol biosynthesis; CDP-diacylglycerol from sn-glycerol 3-phosphate: step 1/3. Converts glycerol-3-phosphate to 1-acyl-sn-glycerol-3-phosphate (lysophosphatidic acid or LPA) by incorporating an acyl moiety at the sn-1 position of the glycerol backbone. Also converts LPA into 1,2-diacyl-sn-glycerol-3-phosphate (phosphatidic acid or PA) by incorporating an acyl moiety at the sn-2 position of the glycerol backbone. Protects cells against lipotoxicity. In Xenopus laevis (African clawed frog), this protein is Glycerol-3-phosphate acyltransferase 3.